The chain runs to 452 residues: NADH-ubiquinone oxidoreductase chain 4 (452 aa).

14 helical membrane passes run V7–L27, M57–S77, V95–I115, W116–E136, M145–V165, M186–V206, P218–L238, T251–L271, S278–S298, F303–M323, L336–F356, N360–L380, A386–T406, and L428–I448.

The protein belongs to the complex I subunit 4 family.

The protein localises to the mitochondrion membrane. The catalysed reaction is a ubiquinone + NADH + 5 H(+)(in) = a ubiquinol + NAD(+) + 4 H(+)(out). Its function is as follows. Core subunit of the mitochondrial membrane respiratory chain NADH dehydrogenase (Complex I) that is believed to belong to the minimal assembly required for catalysis. Complex I functions in the transfer of electrons from NADH to the respiratory chain. The immediate electron acceptor for the enzyme is believed to be ubiquinone. The sequence is that of NADH-ubiquinone oxidoreductase chain 4 (ND4) from Lumbricus terrestris (Common earthworm).